We begin with the raw amino-acid sequence, 297 residues long: Pyrroline-5-carboxylate reductase 1 (297 aa).

This sequence belongs to the pyrroline-5-carboxylate reductase family.

The protein localises to the cytoplasm. It catalyses the reaction L-proline + NADP(+) = (S)-1-pyrroline-5-carboxylate + NADPH + 2 H(+). The catalysed reaction is L-proline + NAD(+) = (S)-1-pyrroline-5-carboxylate + NADH + 2 H(+). It participates in amino-acid biosynthesis; L-proline biosynthesis; L-proline from L-glutamate 5-semialdehyde: step 1/1. In terms of biological role, catalyzes the reduction of 1-pyrroline-5-carboxylate (PCA) to L-proline. The protein is Pyrroline-5-carboxylate reductase 1 (proH) of Bacillus spizizenii (strain ATCC 23059 / NRRL B-14472 / W23) (Bacillus subtilis subsp. spizizenii).